The following is a 178-amino-acid chain: ATP-dependent protease subunit HslV (178 aa).

Thr7 is a catalytic residue. 3 residues coordinate Na(+): Gly162, Cys165, and Thr168.

Belongs to the peptidase T1B family. HslV subfamily. A double ring-shaped homohexamer of HslV is capped on each side by a ring-shaped HslU homohexamer. The assembly of the HslU/HslV complex is dependent on binding of ATP.

It is found in the cytoplasm. The enzyme catalyses ATP-dependent cleavage of peptide bonds with broad specificity.. Its activity is regulated as follows. Allosterically activated by HslU binding. Functionally, protease subunit of a proteasome-like degradation complex believed to be a general protein degrading machinery. In Paraburkholderia phymatum (strain DSM 17167 / CIP 108236 / LMG 21445 / STM815) (Burkholderia phymatum), this protein is ATP-dependent protease subunit HslV.